Here is a 514-residue protein sequence, read N- to C-terminus: Membrane-bound lytic murein transglycosylase F (514 aa).

The first 30 residues, M1–G30, serve as a signal peptide directing secretion. The non-LT domain stretch occupies residues K31–G269. The segment at D270–K514 is LT domain. E314 is an active-site residue.

In the N-terminal section; belongs to the bacterial solute-binding protein 3 family. It in the C-terminal section; belongs to the transglycosylase Slt family.

Its subcellular location is the cell outer membrane. It catalyses the reaction Exolytic cleavage of the (1-&gt;4)-beta-glycosidic linkage between N-acetylmuramic acid (MurNAc) and N-acetylglucosamine (GlcNAc) residues in peptidoglycan, from either the reducing or the non-reducing ends of the peptidoglycan chains, with concomitant formation of a 1,6-anhydrobond in the MurNAc residue.. In terms of biological role, murein-degrading enzyme that degrades murein glycan strands and insoluble, high-molecular weight murein sacculi, with the concomitant formation of a 1,6-anhydromuramoyl product. Lytic transglycosylases (LTs) play an integral role in the metabolism of the peptidoglycan (PG) sacculus. Their lytic action creates space within the PG sacculus to allow for its expansion as well as for the insertion of various structures such as secretion systems and flagella. This is Membrane-bound lytic murein transglycosylase F from Salmonella typhimurium (strain LT2 / SGSC1412 / ATCC 700720).